The primary structure comprises 210 residues: Somatotropin-2 (210 aa).

The N-terminal stretch at 1 to 22 is a signal peptide; that stretch reads MGQVFLLMPVLLVSCFLGQGAA. His38 contributes to the Zn(2+) binding site. Cys71 and Cys183 form a disulfide bridge. Position 192 (Glu192) interacts with Zn(2+). Cys200 and Cys208 are joined by a disulfide.

It belongs to the somatotropin/prolactin family.

The protein resides in the secreted. Growth hormone plays an important role in growth control and is involved in the regulation of several anabolic processes. Implicated as an osmoregulatory substance important for seawater adaptation. The polypeptide is Somatotropin-2 (gh2) (Oncorhynchus mykiss (Rainbow trout)).